Consider the following 1203-residue polypeptide: MDKLPPSMRKRLYSLPQQVGAKAWIMDEEEDAEEEGAGGRQDPSRRSIRLRPLPSPSPSAAAGGTESRSSALGAADSEGPARGAGKSSTNGDCRRFRGSLASLGSRGGGSGGTGSGSSHGHLHDSAEERRLIAEGDASPGEDRTPPGLAAEPERPGASAQPAASPPPPQQPPQPASASCEQPSVDTAIKVEGGAAAGDQILPEAEVRLGQAGFMQRQFGAMLQPGVNKFSLRMFGSQKAVEREQERVKSAGFWIIHPYSDFRFYWDLTMLLLMVGNLIIIPVGITFFKDENTTPWIVFNVVSDTFFLIDLVLNFRTGIVVEDNTEIILDPQRIKMKYLKSWFMVDFISSIPVDYIFLIVETRIDSEVYKTARALRIVRFTKILSLLRLLRLSRLIRYIHQWEEIFHMTYDLASAVVRIVNLIGMMLLLCHWDGCLQFLVPMLQDFPDDCWVSINNMVNNSWGKQYSYALFKAMSHMLCIGYGRQAPVGMSDVWLTMLSMIVGATCYAMFIGHATALIQSLDSSRRQYQEKYKQVEQYMSFHKLPPDTRQRIHDYYEHRYQGKMFDEESILGELSEPLREEIINFNCRKLVASMPLFANADPNFVTSMLTKLRFEVFQPGDYIIREGTIGKKMYFIQHGVVSVLTKGNKETKLADGSYFGEICLLTRGRRTASVRADTYCRLYSLSVDNFNEVLEEYPMMRRAFETVALDRLDRIGKKNSILLHKVQHDLNSGVFNYQENEIIQQIVQHDREMAHCAHRVQAAASATPTPTPVIWTPLIQAPLQAAAATTSVAIALTHHPRLPAAIFRPPPGSGLGNLGAGQTPRHLKRLQSLIPSALGSASPASSPSQVDTPSSSSFHIQQLAGFSAPAGLSPLLPSSSSSPPPGACGSPSAPTPSAGVAATTIAGFGHFHKALGGSLSSSDSPLLTPLQPGARSPQAAQPSPAPPGARGGLGLPEHFLPPPPSSRSPSSSPGQLGQPPGELSLGLATGPLSTPETPPRQPEPPSLVAGASGGASPVGFTPRGGLSPPGHSPGPPRTFPSAPPRASGSHGSLLLPPASSPPPPQVPQRRGTPPLTPGRLTQDLKLISASQPALPQDGAQTLRRASPHSSGESMAAFPLFPRAGGGSGGSGSSGGLGPPGRPYGAIPGQHVTLPRKTSSGSLPPPLSLFGARATSSGGPPLTAGPQREPGARPEPVRSKLPSNL.

Positions 1–182 (MDKLPPSMRK…QPASASCEQP (182 aa)) are disordered. Over 1–263 (MDKLPPSMRK…IIHPYSDFRF (263 aa)) the chain is Cytoplasmic. The segment covering 26 to 36 (MDEEEDAEEEG) has biased composition (acidic residues). The span at 105–117 (SRGGGSGGTGSGS) shows a compositional bias: gly residues. Positions 121–133 (HLHDSAEERRLIA) are enriched in basic and acidic residues. Serine 138 is modified (phosphoserine). Residues 163–174 (ASPPPPQQPPQP) are compositionally biased toward pro residues. An involved in subunit assembly region spans residues 209–260 (GQAGFMQRQFGAMLQPGVNKFSLRMFGSQKAVEREQERVKSAGFWIIHPYSD). The helical transmembrane segment at 264–286 (YWDLTMLLLMVGNLIIIPVGITF) threads the bilayer. Residues 287-293 (FKDENTT) are Extracellular-facing. Residues 294–314 (PWIVFNVVSDTFFLIDLVLNF) traverse the membrane as a helical segment. The Cytoplasmic segment spans residues 315–336 (RTGIVVEDNTEIILDPQRIKMK). Residues 337 to 359 (YLKSWFMVDFISSIPVDYIFLIV) traverse the membrane as a helical segment. The Extracellular portion of the chain corresponds to 360–378 (ETRIDSEVYKTARALRIVR). Residues 379–399 (FTKILSLLRLLRLSRLIRYIH) traverse the membrane as a helical; Voltage-sensor segment. Residues 400–413 (QWEEIFHMTYDLAS) lie on the Cytoplasmic side of the membrane. A helical transmembrane segment spans residues 414–436 (AVVRIVNLIGMMLLLCHWDGCLQ). Residues 437-464 (FLVPMLQDFPDDCWVSINNMVNNSWGKQ) lie on the Extracellular side of the membrane. Residue asparagine 458 is glycosylated (N-linked (GlcNAc...) asparagine). The pore-forming intramembrane region spans 465–486 (YSYALFKAMSHMLCIGYGRQAP). The Extracellular portion of the chain corresponds to 487–491 (VGMSD). Residues 492 to 517 (VWLTMLSMIVGATCYAMFIGHATALI) form a helical membrane-spanning segment. The Cytoplasmic portion of the chain corresponds to 518 to 1203 (QSLDSSRRQY…PVRSKLPSNL (686 aa)). 3',5'-cyclic GMP contacts are provided by tyrosine 559, lysine 562, phenylalanine 564, and glutamate 566. 3',5'-cyclic AMP is bound by residues glycine 659, glutamate 660, cysteine 662, arginine 669, threonine 670, valine 673, and arginine 710. Disordered stretches follow at residues 836–856 (ALGS…SSSS), 870–897 (GLSP…TPSA), and 918–1203 (LSSS…PSNL). Low complexity-rich tracts occupy residues 918-941 (LSSS…AAQP) and 966-986 (RSPS…SLGL). Residues 995–1004 (ETPPRQPEPP) are compositionally biased toward pro residues. Over residues 1005 to 1028 (SLVAGASGGASPVGFTPRGGLSPP) the composition is skewed to low complexity. The span at 1029–1042 (GHSPGPPRTFPSAP) shows a compositional bias: pro residues. Over residues 1045-1056 (ASGSHGSLLLPP) the composition is skewed to low complexity. Phosphoserine occurs at positions 1105 and 1108. Positions 1122 to 1137 (AGGGSGGSGSSGGLGP) are enriched in gly residues.

It belongs to the potassium channel HCN family. Homotetramer. The channel assemble into homotetramers or heteromeric complexes that contains of four pore-forming subunits. Interacts with PEX5L with a 4:4 HCN4:PEX5L stoichiometry; reduces the effects of cAMP on the voltage-dependence and rate of activation. Interacts with IRAG1; regulates HCN4 channel activity. Interacts with IRAG2; regulates HCN4 channel activity. In terms of processing, S-palmitoylated. Highly expressed in thalamus, testis and in heart, both in ventricle and atrium. Detected at much lower levels in amygdala, substantia nigra, cerebellum and hippocampus.

It localises to the cell membrane. It carries out the reaction K(+)(in) = K(+)(out). The catalysed reaction is Na(+)(in) = Na(+)(out). With respect to regulation, activated by cAMP and to a lesser extent by cGMP and cCMP. cAMP binding causes a conformation change that leads to the assembly of an active tetramer and channel opening. Binding of cAMP removes a tonic inhibition conferred by cyclic nucleotide-binding domain (CNBD) on channel opening. Cyclic dinucleotides can modulate HCN4 channel; cyclic dinucleotides acting as potent antagonists of cAMP. Inhibited by extracellular Cs(+) ions. Auxiliary subunits can also regulate HCN4 channel. IRAG1 causes a gain-of-function by shifting HCN4 activation to more depolarized membrane potentials in the absence of cAMP. In contrast, IRAG2 causes a loss-of-function by inhibiting cAMP-dependent potentiation of HCN4 activation. Hyperpolarization-activated ion channel that are permeable to Na(+) and K(+) ions with very slow activation and inactivation. Exhibits higher selectivity for K(+) over Na(+) ions. Contributes to the native pacemaker currents in heart (If) that regulate the rhythm of heart beat. Contributes to the native pacemaker currents in neurons (Ih). May mediate responses to sour stimuli. The sequence is that of Potassium/sodium hyperpolarization-activated cyclic nucleotide-gated channel 4 from Homo sapiens (Human).